Consider the following 251-residue polypeptide: Plant UBX domain-containing protein 1 (251 aa).

M1 is subject to N-acetylmethionine. Positions 104 to 180 (SKLTKAVIRV…GFVPGAIVYF (77 aa)) constitute a UBX domain. A disordered region spans residues 212 to 251 (AVEPVESSSEPATVDSSAVPVEHERKSTEKKTTKPKWFKM). Residues 217–227 (ESSSEPATVDS) are compositionally biased toward polar residues. Over residues 232–243 (VEHERKSTEKKT) the composition is skewed to basic and acidic residues.

In terms of assembly, interacts with CDC48A (non-hexameric) via its UBX-containing C-terminal domain.

The protein localises to the cytoplasm. Its function is as follows. Regulates CDC48A by inhibiting its ATPase activity and by promoting the disassembly of the active hexamer. The protein is Plant UBX domain-containing protein 1 of Arabidopsis thaliana (Mouse-ear cress).